The chain runs to 280 residues: uncharacterized protein (280 aa).

The signal sequence occupies residues 1-21; that stretch reads MRPVIKVGLSTASVYPLRAEA.

The protein to M.tuberculosis Rv0498 and S.coelicolor SCO3347.

This is an uncharacterized protein from Mycobacterium leprae (strain TN).